Reading from the N-terminus, the 486-residue chain is Cephamycin export protein CmcT (486 aa).

14 consecutive transmembrane segments (helical) span residues 24–44 (VLACTAHFLVVFDTSVITVAL), 56–76 (ASLQWVVNSYTLAFAGLLLFG), 88–108 (VFLGGLAVFTLTSLIGGLATS), 121–141 (AGAAVLAPLAVTMLTTSFAEG), 153–173 (AVALVGGASGNLLGGVFTEFL), 178–198 (VLLVNVPIGIPVLFLAARVLA), 210–230 (LDLPGAVLATAGLTLLTLGVS), 241–261 (AVAVPLAGGLLALLAFVVVEA), 284–304 (LAMLLAGASQVPVWFFLTLSM), 317–337 (LGFVPHALVMLVVGLRVVPWL), 345–365 (VLIAAGAAIGALGFWWQSLLT), 369–389 (AYLGGILGPAVLISIGGGLVG), 418–438 (FGGAFGLAVLLTVTGSGTSGS), and 450–470 (FVGIAVFMLAIAVLTPVLPAL).

Belongs to the major facilitator superfamily.

It localises to the cell membrane. In terms of biological role, involved in cephamycin export. The protein is Cephamycin export protein CmcT (cmcT) of Amycolatopsis lactamdurans (Nocardia lactamdurans).